Here is a 397-residue protein sequence, read N- to C-terminus: Chorismate synthase (397 aa).

Residues Arg-40 and Arg-46 each contribute to the NADP(+) site. FMN is bound by residues 129–131 (RSS), 257–258 (QA), Gly-302, 317–321 (KPISS), and Arg-343.

The protein belongs to the chorismate synthase family. As to quaternary structure, homotetramer. Requires FMNH2 as cofactor.

The catalysed reaction is 5-O-(1-carboxyvinyl)-3-phosphoshikimate = chorismate + phosphate. Its pathway is metabolic intermediate biosynthesis; chorismate biosynthesis; chorismate from D-erythrose 4-phosphate and phosphoenolpyruvate: step 7/7. Functionally, catalyzes the anti-1,4-elimination of the C-3 phosphate and the C-6 proR hydrogen from 5-enolpyruvylshikimate-3-phosphate (EPSP) to yield chorismate, which is the branch point compound that serves as the starting substrate for the three terminal pathways of aromatic amino acid biosynthesis. This reaction introduces a second double bond into the aromatic ring system. This Pelodictyon phaeoclathratiforme (strain DSM 5477 / BU-1) protein is Chorismate synthase.